A 305-amino-acid polypeptide reads, in one-letter code: Glutaminase (305 aa).

Positions 61, 113, 158, 165, 189, 241, and 259 each coordinate substrate.

It belongs to the glutaminase family. Homotetramer.

It carries out the reaction L-glutamine + H2O = L-glutamate + NH4(+). The chain is Glutaminase from Alkaliphilus metalliredigens (strain QYMF).